Reading from the N-terminus, the 1174-residue chain is Male determiner protein Mdmd(Y) (1174 aa).

A compositionally biased stretch (basic and acidic residues) spans 1–15 (MNATDAESRKPENKP). 3 disordered regions span residues 1–51 (MNAT…SGQR), 79–109 (RKDG…HPVE), and 136–259 (KQLS…LRRS). A compositionally biased stretch (low complexity) spans 16 to 35 (SSESSSSGSTSGSSDGEVSS). The segment covering 36 to 47 (KTYFKNNKSKVL) has biased composition (polar residues). The span at 79–92 (RKDGSNEMLPKEDS) shows a compositional bias: basic and acidic residues. Low complexity predominate over residues 138–153 (LSAYRSRSRSTRLSYS). Residues 167-180 (SRYKKSVLRNRRTS) show a composition bias toward basic residues. Over residues 183–200 (HGRDSSTTKRSVSRDKDN) the composition is skewed to basic and acidic residues. A compositionally biased stretch (basic residues) spans 201–223 (RLRRRIGSSRSHTRSHSRFRRSE). Over residues 235 to 259 (RSQERRHERRRSMSSDYERIALRRS) the composition is skewed to basic and acidic residues. In terms of domain architecture, MIF4G spans 348-531 (KKYIHGYINK…KVLFQVRRDG (184 aa)). Low complexity predominate over residues 597-608 (DSDGSFGSGSNS). The segment at 597-616 (DSDGSFGSGSNSETALSDCD) is disordered. The MI domain occupies 641–757 (ALRRTIYLTL…SWDVLDCIKL (117 aa)). A compositionally biased stretch (low complexity) spans 840–857 (SAPSSSSSSSLSSELSAP). Disordered stretches follow at residues 840–1045 (SAPS…SRTK) and 1089–1135 (KGGP…SREY). 2 stretches are compositionally biased toward basic residues: residues 869-886 (KKKH…KNPS) and 895-909 (IVGK…KTIK). The span at 910-924 (RRTDKDNSSSKDNFL) shows a compositional bias: basic and acidic residues. A compositionally biased stretch (low complexity) spans 926 to 957 (SESSSNESISLDSLSSELFAPSSYSSSESSND). Over residues 963–1001 (KHKGKNKKMTKKKNPSNKREKTKKKLSKNKKAPNKNTKK) the composition is skewed to basic residues. The span at 1010 to 1020 (SSESSISESKS) shows a compositional bias: low complexity. Over residues 1034-1045 (RKKRVTSKSRTK) the composition is skewed to basic residues. Residues 1089–1118 (KGGPNCRKDNYGNRQNHEISQRHDSEIKRR) are compositionally biased toward basic and acidic residues. Over residues 1119-1130 (REERKKRHHEKN) the composition is skewed to basic residues.

This sequence belongs to the CWC22 family. Component of the spliceosome C complex.

The protein localises to the nucleus speckle. Its function is as follows. Male determiner protein (M-factor) that controls male somatic sexual differentiation. Acts as a dominant factor that regulates the mRNA splicing of transformer (tra) and doublesex (dsx) transcripts and promotes expression of male splice forms of tra and dsx. Probably acts as a component of the spliceosome C complex required for mRNA splicing factor and exon-junction complex (EJC) assembly. Hinders eIF4AIII from non-specifically binding RNA and escorts it to the splicing machinery to promote EJC assembly on mature mRNAs. The sequence is that of Male determiner protein Mdmd(Y) from Musca domestica (House fly).